Here is a 394-residue protein sequence, read N- to C-terminus: Probable nucleoredoxin 2 (394 aa).

Thioredoxin domains are found at residues 15–176 and 180–327; these read GVGG…QTLE and SVSG…EMED.

This sequence belongs to the nucleoredoxin family.

It carries out the reaction [protein]-dithiol + NAD(+) = [protein]-disulfide + NADH + H(+). The catalysed reaction is [protein]-dithiol + NADP(+) = [protein]-disulfide + NADPH + H(+). Functionally, probable thiol-disulfide oxidoreductase that may participate in various redox reactions. The polypeptide is Probable nucleoredoxin 2 (Oryza sativa subsp. japonica (Rice)).